A 522-amino-acid polypeptide reads, in one-letter code: MGFLDNPTIILAHIRQSHVTSDDTGMCEVVLIDHDVDLEKIHPPSMPGDSGSEIQGSNGETQGYVYAQSVDITSSWDFGIRRRSNTAQRLERLRKERQNQIKCKNIQWKERNSKQSAQELKSLFEKKSLKEKPPNSGKQSILSVRLEQCPLQLNNPFNEYSKFDGKGHVGTTATKKIDVYLPLHSSQDRLLPMTVVTMASARVQDLIGLICWQYTSEGREPKLNDNVSAYCLHIAEDDGEVDTDFPPLDSNEPIHKFGFSTLALVEKYSSPGLTSKESLFVRINAAHGFSLIQVDNTKVTMKEILLKAVKRRKGSQKISGPQYRLEKQRQPNVAVDLESTLESQSAWEFCLVRENSSRADGVFEEDSQIDIATVQDMLSSHHYKSFKVSMIHRLRFTTELQLGISGDKVEIDPVTSQKASTKFWIKQKPISIDSDLLCACDLAEEKSPSHAIFKLTYLSNHDYKHLYFESDAATVNEIVLKVNYILESRASTARADYFAQKQRKLNRRTSFSFQKEKKSGQQ.

Positions 2 to 184 are interaction with MAP3K2; sequence GFLDNPTIIL…KKIDVYLPLH (183 aa). Residues 2-267 are interaction with NBN; sequence GFLDNPTIIL…GFSTLALVEK (266 aa). At Thr86 the chain carries Phosphothreonine. Phosphoserine is present on residues Ser128, Ser186, Ser315, and Ser356. The 129-residue stretch at 139–267 folds into the CRIM domain; that stretch reads QSILSVRLEQ…GFSTLALVEK (129 aa). Residues 279-353 are SIN1-type RBD; sequence LFVRINAAHG…QSAWEFCLVR (75 aa). The SIN1-type PH domain maps to 382–487; it reads HYKSFKVSMI…IVLKVNYILE (106 aa). Position 393 (Arg393) interacts with a 1,2-diacyl-sn-glycero-3-phospho-(1D-myo-inositol-3,4,5-trisphosphate). The residue at position 398 (Thr398) is a Phosphothreonine. A 1,2-diacyl-sn-glycero-3-phospho-(1D-myo-inositol-3,4,5-trisphosphate) contacts are provided by Lys428 and Lys464. The interval 468 to 522 is interaction with ATF2; the sequence is FESDAATVNEIVLKVNYILESRASTARADYFAQKQRKLNRRTSFSFQKEKKSGQQ. Ser510 is subject to Phosphoserine.

The protein belongs to the SIN1 family. As to quaternary structure, component of the mechanistic target of rapamycin complex 2 (mTORC2), consisting in two heterotretramers composed of MTOR, MLST8, RICTOR and MAPKAP1/SIN1. The mTORC2 core complex associates with PRR5/PROTOR1 and/or PRR5L/PROTOR2. Contrary to mTORC1, mTORC2 does not bind to and is not sensitive to FKBP12-rapamycin. Interacts with MAP3K2. Interacts with ATF2. Interacts with MAPK8. Interacts with GTP-bound HRAS and KRAS; inhibiting their activity. Interacts with IFNAR2. Phosphorylation at Ser-128 by PKC promotes relocalization to the perinuclear region, where the mTORC2 complex specifically mediates phosphorylation of SGK1. Phosphorylated at Thr-86 by AKT1 or RPS6KB1 in the presence of growth factors; the effect of this phosphorylation is however unclear. According to two studies, phosphorylation at Thr-86 by AKT1 is part of a positive feedback loop that increases mTORC2 activation. According to another study, phosphorylation at Thr-86 and Thr-398 by RPS6KB1 promotes dissociation from the mTORC2 complex, leading to inhibit mTORC2 signaling. Present in the lumenal epithelium and glandular epithelium of endometrium (at protein level).

It localises to the cell membrane. It is found in the cytoplasmic vesicle. The protein localises to the endoplasmic reticulum membrane. Its subcellular location is the early endosome membrane. The protein resides in the late endosome membrane. It localises to the lysosome membrane. It is found in the golgi apparatus membrane. The protein localises to the mitochondrion outer membrane. Its subcellular location is the cytoplasm. The protein resides in the perinuclear region. It localises to the nucleus. Phosphatidylinositol 3,4,5-trisphosphate (PI(3,4,5)P3) promotes MTOR activation by relieving MAPKAP1/SIN1-mediated inhibition of MTOR that takes place in absence of PI(3,4,5)P3. Functionally, component of the mechanistic target of rapamycin complex 2 (mTORC2), which transduces signals from growth factors to pathways involved in proliferation, cytoskeletal organization, lipogenesis and anabolic output. In response to growth factors, mTORC2 phosphorylates and activates AGC protein kinase family members, including AKT (AKT1, AKT2 and AKT3), PKC (PRKCA, PRKCB and PRKCE) and SGK1. In contrast to mTORC1, mTORC2 is nutrient-insensitive. Within the mTORC2 complex, MAPKAP1/SIN1 acts as a substrate adapter which recognizes and binds AGC protein kinase family members for phosphorylation by MTOR. mTORC2 plays a critical role in AKT1 activation by mediating phosphorylation of different sites depending on the context, such as 'Thr-450', 'Ser-473', 'Ser-477' or 'Thr-479', facilitating the phosphorylation of the activation loop of AKT1 on 'Thr-308' by PDPK1/PDK1 which is a prerequisite for full activation. mTORC2 catalyzes the phosphorylation of SGK1 at 'Ser-422' and of PRKCA on 'Ser-657'. The mTORC2 complex also phosphorylates various proteins involved in insulin signaling, such as FBXW8 and IGF2BP1. mTORC2 acts upstream of Rho GTPases to regulate the actin cytoskeleton, probably by activating one or more Rho-type guanine nucleotide exchange factors. mTORC2 promotes the serum-induced formation of stress-fibers or F-actin. MAPKAP1 inhibits MAP3K2 by preventing its dimerization and autophosphorylation. Inhibits HRAS and KRAS independently of mTORC2 complex. Enhances osmotic stress-induced phosphorylation of ATF2 and ATF2-mediated transcription. Involved in ciliogenesis, regulates cilia length through its interaction with CCDC28B independently of mTORC2 complex. This chain is Target of rapamycin complex 2 subunit MAPKAP1 (MAPKAP1), found in Ovis aries (Sheep).